Reading from the N-terminus, the 237-residue chain is Ly6/PLAUR domain-containing protein 8 (237 aa).

The signal sequence occupies residues 1-19 (MKGILVAGITAVLVAAVES). Asparagine 45, asparagine 73, asparagine 107, asparagine 118, asparagine 132, asparagine 172, asparagine 175, and asparagine 185 each carry an N-linked (GlcNAc...) asparagine glycan. One can recognise a UPAR/Ly6 domain in the interval 125–176 (CPACYESNGTSCHGKPWKCYEEEQCVFLVAELKNDIESKSLVLKGCSNVSNA). The GPI-anchor amidated asparagine moiety is linked to residue asparagine 215. Residues 216–237 (VGSKASLYLLALASLLLRGLLP) constitute a propeptide, removed in mature form.

This sequence belongs to the CNF-like-inhibitor family. Highly N-glycosylated. Not O-glycosylated. In terms of processing, GPI-anchored. The GPI-anchor is cleaved, leading to secretion into the colonic lumen. As to expression, expressed in the large intestine. Preferentially expressed on the epithelial layer exposed to the lumen (at protein level).

Its subcellular location is the cell membrane. It is found in the secreted. In terms of biological role, secreted protein specifically required to prevent invasion of Gram-negative bacteria in the inner mucus layer of the colon epithelium, a portion of the large intestine which is free of commensal microbiota. Prevents invasion of flagellated microbiota by binding to the flagellum of bacteria, such as P.mirabilis, thereby inhibiting bacterial motility in the intestinal lumen. Segregation of intestinal bacteria and epithelial cells in the colon is required to preserve intestinal homeostasis. This chain is Ly6/PLAUR domain-containing protein 8, found in Homo sapiens (Human).